A 156-amino-acid polypeptide reads, in one-letter code: MNINLTLFGQTIAFAIFVWFCMKFVWPPLTQAMQERQKKIAEGLDAAGRAERDLQLAQERAAQMLRETKEQAAEILDRANKTANAIVEEAKAQARSEGEKLIAGAKAEIDLEVNRAKDQLRAQVAALAVTGAEQILQSTVDGAAHNDLVAKLASQL.

The chain crosses the membrane as a helical span at residues 7–29 (LFGQTIAFAIFVWFCMKFVWPPL).

Belongs to the ATPase B chain family. In terms of assembly, F-type ATPases have 2 components, F(1) - the catalytic core - and F(0) - the membrane proton channel. F(1) has five subunits: alpha(3), beta(3), gamma(1), delta(1), epsilon(1). F(0) has three main subunits: a(1), b(2) and c(10-14). The alpha and beta chains form an alternating ring which encloses part of the gamma chain. F(1) is attached to F(0) by a central stalk formed by the gamma and epsilon chains, while a peripheral stalk is formed by the delta and b chains.

It localises to the cell inner membrane. F(1)F(0) ATP synthase produces ATP from ADP in the presence of a proton or sodium gradient. F-type ATPases consist of two structural domains, F(1) containing the extramembraneous catalytic core and F(0) containing the membrane proton channel, linked together by a central stalk and a peripheral stalk. During catalysis, ATP synthesis in the catalytic domain of F(1) is coupled via a rotary mechanism of the central stalk subunits to proton translocation. Functionally, component of the F(0) channel, it forms part of the peripheral stalk, linking F(1) to F(0). In Ectopseudomonas mendocina (strain ymp) (Pseudomonas mendocina), this protein is ATP synthase subunit b.